Here is a 185-residue protein sequence, read N- to C-terminus: Peptidoglycan-recognition protein SC1a/b (185 aa).

Residues 1 to 21 (MVSKVALLLAVLVCSQYMAQG) form the signal peptide. The N-acetylmuramoyl-L-alanine amidase domain maps to 46–170 (SYAIIHHTAG…RQVSATECPG (125 aa)). A Zn(2+)-binding site is contributed by His51. Cys58 and Cys64 are oxidised to a cystine. 2 residues coordinate Zn(2+): His160 and Cys168.

Belongs to the N-acetylmuramoyl-L-alanine amidase 2 family. It depends on Zn(2+) as a cofactor.

The protein localises to the secreted. It catalyses the reaction Hydrolyzes the link between N-acetylmuramoyl residues and L-amino acid residues in certain cell-wall glycopeptides.. N-acetylmuramyl-L-alanine amidase involved in innate immunity by degrading bacterial peptidoglycans (PGN). Plays a scavenger role by digesting biologically active PGN into biologically inactive fragments. Has no direct bacteriolytic activity. This is Peptidoglycan-recognition protein SC1a/b (PGRP-SC1a) from Drosophila simulans (Fruit fly).